The chain runs to 458 residues: Phenylalanine-specific permease (458 aa).

Residues methionine 1–histidine 27 lie on the Cytoplasmic side of the membrane. A helical transmembrane segment spans residues isoleucine 28–alanine 48. Residues isoleucine 49–glutamine 50 are Periplasmic-facing. Residues methionine 51–methionine 71 traverse the membrane as a helical segment. The Cytoplasmic segment spans residues arginine 72–tryptophan 105. Residues asparagine 106 to methionine 126 form a helical membrane-spanning segment. Residues glutamine 127–aspartate 132 are Periplasmic-facing. Residues valine 133 to asparagine 153 traverse the membrane as a helical segment. Topologically, residues valine 154–threonine 160 are cytoplasmic. A helical transmembrane segment spans residues glutamate 161–tryptophan 181. Residues leucine 182–asparagine 196 are Periplasmic-facing. A helical membrane pass occupies residues leucine 197–valine 217. The Cytoplasmic portion of the chain corresponds to isoleucine 218–valine 250. Residues tyrosine 251–valine 271 traverse the membrane as a helical segment. At glutamate 272–aspartate 288 the chain is on the periplasmic side. The helical transmembrane segment at serine 289–asparagine 309 threads the bilayer. The Cytoplasmic segment spans residues serine 310–proline 341. Residues isoleucine 342 to leucine 362 form a helical membrane-spanning segment. Residues proline 363–phenylalanine 367 are Periplasmic-facing. Residues glycine 368–alanine 388 traverse the membrane as a helical segment. Over histidine 389–proline 411 the chain is Cytoplasmic. Residues phenylalanine 412 to aspartate 432 form a helical membrane-spanning segment. Residues aspartate 433 to methionine 434 lie on the Periplasmic side of the membrane. The chain crosses the membrane as a helical span at residues arginine 435–leucine 455. Residues arginine 456–lysine 458 are Cytoplasmic-facing.

This sequence belongs to the amino acid-polyamine-organocation (APC) superfamily. Amino acid transporter (AAT) (TC 2.A.3.1) family.

The protein localises to the cell inner membrane. It carries out the reaction L-phenylalanine(in) + H(+)(in) = L-phenylalanine(out) + H(+)(out). Its function is as follows. Permease that is involved in the active transport across the cytoplasmic membrane of phenylalanine. Can also transport tyrosine, but not tryptophan. The polypeptide is Phenylalanine-specific permease (Escherichia coli (strain K12)).